The primary structure comprises 148 residues: Deoxyuridine 5'-triphosphate nucleotidohydrolase (148 aa).

Substrate is bound by residues 68 to 70 (RSG), N81, 85 to 87 (TID), and K95.

Belongs to the dUTPase family. Mg(2+) serves as cofactor.

It catalyses the reaction dUTP + H2O = dUMP + diphosphate + H(+). It functions in the pathway pyrimidine metabolism; dUMP biosynthesis; dUMP from dCTP (dUTP route): step 2/2. In terms of biological role, this enzyme is involved in nucleotide metabolism: it produces dUMP, the immediate precursor of thymidine nucleotides and it decreases the intracellular concentration of dUTP so that uracil cannot be incorporated into DNA. This chain is Deoxyuridine 5'-triphosphate nucleotidohydrolase, found in Thermoanaerobacter sp. (strain X514).